Here is a 210-residue protein sequence, read N- to C-terminus: Cell division protein SepF (210 aa).

Belongs to the SepF family. As to quaternary structure, homodimer. Interacts with FtsZ.

The protein resides in the cytoplasm. Functionally, cell division protein that is part of the divisome complex and is recruited early to the Z-ring. Probably stimulates Z-ring formation, perhaps through the cross-linking of FtsZ protofilaments. Its function overlaps with FtsA. The chain is Cell division protein SepF from Mycobacterium leprae (strain Br4923).